An 898-amino-acid chain; its full sequence is Tight junction protein ZO-3 (898 aa).

The region spanning 11–93 (TATLCRDPRR…LANITVKRPR (83 aa)) is the PDZ 1 domain. Positions 98–165 (PATKAGTSGR…SPGGNSEANG (68 aa)) are disordered. 5 positions are modified to phosphoserine: serine 128, serine 156, serine 161, serine 195, and serine 313. The PDZ 2 domain maps to 187 to 264 (SVLVRRTESE…KLTLLVLRDR (78 aa)). A disordered region spans residues 295–368 (LSQAVPSHVP…QSAEDRGYSP (74 aa)). Residues 312–349 (RSLDSDGTDSPRDSPPLRRENSLDSRTISEPDAPRHSS) show a composition bias toward basic and acidic residues. Threonine 319 carries the post-translational modification Phosphothreonine. Phosphoserine occurs at positions 321 and 360. Residues 369–435 (DSRVVRFHKG…LTREEAVQFL (67 aa)) form the PDZ 3 domain. One can recognise an SH3 domain in the interval 464–538 (GDSFYIRTHF…PNQSRAEQLA (75 aa)). Residues 569–750 (LRRGAKKSTQ…WYQELKAVVR (182 aa)) enclose the Guanylate kinase-like domain. Serine 580 carries the post-translational modification Phosphoserine. Residues 759–898 (TAEDQLDNSS…GYDWGPATDL (140 aa)) are disordered. Over residues 762 to 772 (DQLDNSSEDNL) the composition is skewed to acidic residues. Positions 780 to 790 (ADSSADLSCDS) are enriched in low complexity. Over residues 796 to 814 (YETDGEGYTDGEGYTDVDE) the composition is skewed to acidic residues. Positions 831–841 (EEPRSPRDHGR) are enriched in basic and acidic residues. A phosphoserine mark is found at serine 835, serine 884, and serine 885.

It belongs to the MAGUK family. As to quaternary structure, heterodimer with TJP1. Interacts with UBN1. Interacts with occludin OCLN and claudins. Interacts with PATJ. Interacts with FASLG. Interacts with CCND1. Post-translationally, phosphorylated.

Its subcellular location is the cell membrane. The protein localises to the cell junction. It localises to the tight junction. The protein resides in the nucleus. Its function is as follows. TJP1, TJP2, and TJP3 are closely related scaffolding proteins that link tight junction (TJ) transmembrane proteins such as claudins, junctional adhesion molecules, and occludin to the actin cytoskeleton. The tight junction acts to limit movement of substances through the paracellular space and as a boundary between the compositionally distinct apical and basolateral plasma membrane domains of epithelial and endothelial cells. Binds and recruits PATJ to tight junctions where it connects and stabilizes apical and lateral components of tight junctions. Promotes cell-cycle progression through the sequestration of cyclin D1 (CCND1) at tight junctions during mitosis which prevents CCND1 degradation during M-phase and enables S-phase transition. With TJP1 and TJP2, participates in the junctional retention and stability of the transcription factor DBPA, but is not involved in its shuttling to the nucleus. Contrary to TJP2, TJP3 is dispensable for individual viability, embryonic development, epithelial differentiation, and the establishment of TJs, at least in the laboratory environment. The sequence is that of Tight junction protein ZO-3 (TJP3) from Canis lupus familiaris (Dog).